Reading from the N-terminus, the 506-residue chain is Probable UTP--glucose-1-phosphate uridylyltransferase (506 aa).

Phosphoserine occurs at positions 15 and 17. UTP contacts are provided by residues 115–118 (LNGG), Lys-129, Gln-192, and Gly-221. Position 117 to 118 (117 to 118 (GG)) interacts with substrate. Lys-129 is a Mg(2+) binding site. Substrate is bound by residues His-222 and 250–252 (NID). 2 residues coordinate UTP: Asp-252 and Lys-394. Asp-252 contacts Mg(2+). Residue Lys-394 is part of the active site. Residues 455–506 (HLTITGDVNIGRNVTLKGTVIIVASDANRIDIPNGSVLENCVITGNLNILEH) are oligomerization.

The protein belongs to the UDPGP type 1 family. Homooctamer.

The protein resides in the cytoplasm. The protein localises to the nucleus. The enzyme catalyses alpha-D-glucose 1-phosphate + UTP + H(+) = UDP-alpha-D-glucose + diphosphate. Its function is as follows. Plays a central role as a glucosyl donor in cellular metabolic pathways. The polypeptide is Probable UTP--glucose-1-phosphate uridylyltransferase (fyu1) (Schizosaccharomyces pombe (strain 972 / ATCC 24843) (Fission yeast)).